We begin with the raw amino-acid sequence, 109 residues long: U26-theraphotoxin-Cg1a (109 aa).

An N-terminal signal peptide occupies residues 1 to 18 (MNTIIPLLLLSLLITVYA). A propeptide spanning residues 19 to 67 (YALEDGNKEEIQDIAESEFEASNEMLQLAHLLEADRAETEEDRNSRQKR) is cleaved from the precursor. Cystine bridges form between Cys68-Cys83, Cys75-Cys88, and Cys82-Cys103.

This sequence belongs to the neurotoxin 14 (magi-1) family. 07 (Jztx-56) subfamily. As to expression, expressed by the venom gland.

It is found in the secreted. Functionally, probable ion channel inhibitor. This Chilobrachys guangxiensis (Chinese earth tiger tarantula) protein is U26-theraphotoxin-Cg1a.